A 356-amino-acid chain; its full sequence is Guanine nucleotide-binding protein alpha-15 subunit (356 aa).

A lipid anchor (N-myristoyl glycine) is attached at G2. A lipid anchor (S-palmitoyl cysteine) is attached at C5. The 324-residue stretch at 33–356 (GNQKLLLLGT…GRNLRGTGME (324 aa)) folds into the G-alpha domain. A G1 motif region spans residues 36–49 (KLLLLGTGECGKST). GTP is bound by residues 41–48 (GTGECGKS), 177–183 (LRIRIPT), 202–206 (DVGGQ), 271–274 (NKRD), and A328. The Mg(2+) site is built by S48 and T183. Positions 175–183 (DMLRIRIPT) are G2 motif. The segment at 198 to 207 (FRIYDVGGQR) is G3 motif. The G4 motif stretch occupies residues 267-274 (ILFLNKRD). The segment at 326–331 (TCATDT) is G5 motif.

Belongs to the G-alpha family. G proteins are composed of 3 units; alpha, beta and gamma. The alpha chain contains the guanine nucleotide binding site.

Guanine nucleotide-binding proteins (G proteins) are involved as modulators or transducers in various transmembrane signaling systems. In Caenorhabditis elegans, this protein is Guanine nucleotide-binding protein alpha-15 subunit (gpa-15).